A 296-amino-acid polypeptide reads, in one-letter code: MNKEQLEKMKNGKGFIAALDQSGGSTPKALKEYGVNEDQYSNEDEMFQLVHDMRTRVVTSPSFSPDKILGAILFEQTMDREVEGKYTADYLADKGVVPFLKVDKGLAEEQNGVQLMKPIDNLDSLLDRANERHIFGTKMRSNILELNEQGIKDVVEQQFEVAKQIIAKGLVPIIEPEVNINAKDKAEIEKVLKAELKKGLDSLNADQLVMLKLTIPTEANLYKDLAEHPNVVRIVVLSGGYSREKANELLKDNAELIASFSRALASDLRAGQSKEEFDKALGDAVESIYDASVNKN.

Glutamate 175 (proton acceptor) is an active-site residue. Residue lysine 212 is the Schiff-base intermediate with dihydroxyacetone-P of the active site.

The protein belongs to the class I fructose-bisphosphate aldolase family.

The enzyme catalyses beta-D-fructose 1,6-bisphosphate = D-glyceraldehyde 3-phosphate + dihydroxyacetone phosphate. It functions in the pathway carbohydrate degradation; glycolysis; D-glyceraldehyde 3-phosphate and glycerone phosphate from D-glucose: step 4/4. The polypeptide is Fructose-bisphosphate aldolase class 1 (Staphylococcus aureus (strain MRSA252)).